We begin with the raw amino-acid sequence, 198 residues long: Na(+)-translocating NADH-quinone reductase subunit E (198 aa).

Helical transmembrane passes span 11–31, 35–55, 77–97, 109–129, 140–160, and 176–196; these read AVFVENMALAFFLGMCTFLAV, VSTAFGLGIAVTVVLGISVPA, FLNFITFIGVIAAIVQVLEMI, LGIFLPLITVNCAIFGGVSFM, IVYGFGSGMGWMLAIVALAGI, and LGITFISTGLMALGFMSFAGV.

Belongs to the NqrDE/RnfAE family. Composed of six subunits; NqrA, NqrB, NqrC, NqrD, NqrE and NqrF.

It localises to the cell inner membrane. It catalyses the reaction a ubiquinone + n Na(+)(in) + NADH + H(+) = a ubiquinol + n Na(+)(out) + NAD(+). In terms of biological role, NQR complex catalyzes the reduction of ubiquinone-1 to ubiquinol by two successive reactions, coupled with the transport of Na(+) ions from the cytoplasm to the periplasm. NqrA to NqrE are probably involved in the second step, the conversion of ubisemiquinone to ubiquinol. The polypeptide is Na(+)-translocating NADH-quinone reductase subunit E (Yersinia pestis bv. Antiqua (strain Nepal516)).